A 169-amino-acid polypeptide reads, in one-letter code: Disulfide bond formation protein B (169 aa).

At 1–14 the chain is on the cytoplasmic side; sequence MNNLTLSLRRERRL. The helical transmembrane segment at 15–31 threads the bilayer; it reads LVLLALVCLALLAGALY. At 32 to 49 the chain is on the periplasmic side; it reads LQYVKNEDPCPLCIIQRY. A disulfide bridge links cysteine 41 with cysteine 44. A helical transmembrane segment spans residues 50-64; it reads FFVLIAVFAFIGAGM. Residues 65-71 lie on the Cytoplasmic side of the membrane; it reads ASGAGVA. The chain crosses the membrane as a helical span at residues 72–89; sequence VTEALIVLSAAAGVGTAA. The Periplasmic portion of the chain corresponds to 90–144; it reads RHLYVQLNPGFSCGFDALQPVVDSLPPARWLPGVFKVAGLCETVYPPIFGILLPG. Cysteines 102 and 130 form a disulfide. The chain crosses the membrane as a helical span at residues 145-163; it reads WALIAFVLIAVPVAVSLLR. At 164–169 the chain is on the cytoplasmic side; it reads HRGRLR.

It belongs to the DsbB family.

The protein localises to the cell inner membrane. In terms of biological role, required for disulfide bond formation in some periplasmic proteins. Acts by oxidizing the DsbA protein. The protein is Disulfide bond formation protein B of Burkholderia mallei (strain ATCC 23344).